A 951-amino-acid chain; its full sequence is Protein translocase subunit SecA 1 (951 aa).

ATP is bound by residues Q87, 105–109, and D525; that span reads GEGKT. The disordered stretch occupies residues 911–942; sequence PVVSADRSSRDPGNPASWGKVGRNEDCPCGSG. Positions 937, 939, 948, and 949 each coordinate Zn(2+).

This sequence belongs to the SecA family. As to quaternary structure, monomer and homodimer. Part of the essential Sec protein translocation apparatus which comprises SecA, SecYEG and auxiliary proteins SecDF-YajC and YidC. The cofactor is Zn(2+).

It is found in the cell inner membrane. The protein localises to the cytoplasm. It catalyses the reaction ATP + H2O + cellular proteinSide 1 = ADP + phosphate + cellular proteinSide 2.. Functionally, part of the Sec protein translocase complex. Interacts with the SecYEG preprotein conducting channel. Has a central role in coupling the hydrolysis of ATP to the transfer of proteins into and across the cell membrane, serving both as a receptor for the preprotein-SecB complex and as an ATP-driven molecular motor driving the stepwise translocation of polypeptide chains across the membrane. This chain is Protein translocase subunit SecA 1, found in Nitrobacter hamburgensis (strain DSM 10229 / NCIMB 13809 / X14).